A 154-amino-acid chain; its full sequence is MAL-like protein (154 aa).

The next 4 helical transmembrane spans lie at 24–44, 61–81, 99–119, and 131–151; these read LFLT…FWVW, VLYV…SYLF, GTTG…TIIS, and VAAS…AFSI. An MARVEL domain is found at 24 to 154; sequence LFLTIPFAFF…ILHAFSIYYH (131 aa).

The protein belongs to the MAL family.

Its subcellular location is the membrane. This chain is MAL-like protein (Mall), found in Mus musculus (Mouse).